The sequence spans 427 residues: MTYQHIYNIIKKKAYFDAHQAVLIAVSGGVDSMNLLHFLHAFQAELQIRIGIAHVNHKQRPESDDEEAYLRSWAKKHAIPIYVAYFQGAFSENAARHFRYQFFEEIMQQEHYSALVTAHHADDQAETILMRLIRGSRLRHLAGIREVQPFATGQLIRPFLTVSKEELPNPFHFEDHSNDSMAYFRNRVRHHYLPDFKRENPQATQSLIALSAESRLLLQAFDDLTKGLAFHRLDCFLAQSAAVQFFLLQHYLETFPQLAIKKSQFDDLLHIIRRQKQGIYPIKNTYCLLIEKESFVIKKIIPKTDLNRESKMVSYGDPLDYGGYRFAFSGDLTDKGHDIVIPLYSLSPVTLRHRQAGDRLFLGEFSKKLRRLFIDGKFTNEQRQNAIVGEQAGVIIFVLVGDETYLRKASKHDIMLAKLYIDKLEKR.

27–32 serves as a coordination point for ATP; that stretch reads SGGVDS.

This sequence belongs to the tRNA(Ile)-lysidine synthase family.

It is found in the cytoplasm. It carries out the reaction cytidine(34) in tRNA(Ile2) + L-lysine + ATP = lysidine(34) in tRNA(Ile2) + AMP + diphosphate + H(+). Ligates lysine onto the cytidine present at position 34 of the AUA codon-specific tRNA(Ile) that contains the anticodon CAU, in an ATP-dependent manner. Cytidine is converted to lysidine, thus changing the amino acid specificity of the tRNA from methionine to isoleucine. In Streptococcus equi subsp. zooepidemicus (strain H70), this protein is tRNA(Ile)-lysidine synthase.